A 206-amino-acid polypeptide reads, in one-letter code: ATP-dependent Clp protease proteolytic subunit (206 aa).

The active-site Nucleophile is the S101. The active site involves H126.

It belongs to the peptidase S14 family. Component of the chloroplastic Clp protease core complex.

The protein resides in the plastid. Its subcellular location is the chloroplast stroma. It carries out the reaction Hydrolysis of proteins to small peptides in the presence of ATP and magnesium. alpha-casein is the usual test substrate. In the absence of ATP, only oligopeptides shorter than five residues are hydrolyzed (such as succinyl-Leu-Tyr-|-NHMec, and Leu-Tyr-Leu-|-Tyr-Trp, in which cleavage of the -Tyr-|-Leu- and -Tyr-|-Trp bonds also occurs).. Cleaves peptides in various proteins in a process that requires ATP hydrolysis. Has a chymotrypsin-like activity. Plays a major role in the degradation of misfolded proteins. The protein is ATP-dependent Clp protease proteolytic subunit of Solanum lycopersicum (Tomato).